A 244-amino-acid chain; its full sequence is MRKIIQEKLNEGKVLHFSLFDPDKVDLESIYSIALKLVESGTSGFLIGGTLGVSKEKLDSIIEILEDFEVPKIIFPSNVNLITEKADAILFMSLLNSDDIYYITGAQLIAAPIIKKLKLESLPTGYIIVGHGGTAAHVGKARVIPYDNIELIVAYSIMAELFGMDFVYLEAGSGAPEPIRPSVISITKKYLENSKIIVGGGIRNEEIAKELALAGADIIVTGNIIEQNLEKALKIVKEISNIRR.

Mg(2+) is bound by residues aspartate 21 and threonine 50. Sn-glycerol 1-phosphate is bound by residues 168–174, 200–201, and 222–223; these read YLEAGSG, GG, and GN.

Belongs to the GGGP/HepGP synthase family. Group II subfamily. Requires Mg(2+) as cofactor.

Its subcellular location is the cytoplasm. The catalysed reaction is sn-glycerol 1-phosphate + (2E,6E,10E)-geranylgeranyl diphosphate = sn-3-O-(geranylgeranyl)glycerol 1-phosphate + diphosphate. It functions in the pathway membrane lipid metabolism; glycerophospholipid metabolism. Functionally, prenyltransferase that catalyzes the transfer of the geranylgeranyl moiety of geranylgeranyl diphosphate (GGPP) to the C3 hydroxyl of sn-glycerol-1-phosphate (G1P). This reaction is the first ether-bond-formation step in the biosynthesis of archaeal membrane lipids. The chain is Geranylgeranylglyceryl phosphate synthase from Sulfurisphaera tokodaii (strain DSM 16993 / JCM 10545 / NBRC 100140 / 7) (Sulfolobus tokodaii).